The following is a 190-amino-acid chain: Peptidyl-tRNA hydrolase (190 aa).

A tRNA-binding site is contributed by tyrosine 17. Histidine 22 serves as the catalytic Proton acceptor. The tRNA site is built by tyrosine 67 and asparagine 69.

This sequence belongs to the PTH family. As to quaternary structure, monomer.

The protein localises to the cytoplasm. The enzyme catalyses an N-acyl-L-alpha-aminoacyl-tRNA + H2O = an N-acyl-L-amino acid + a tRNA + H(+). Hydrolyzes ribosome-free peptidyl-tRNAs (with 1 or more amino acids incorporated), which drop off the ribosome during protein synthesis, or as a result of ribosome stalling. In terms of biological role, catalyzes the release of premature peptidyl moieties from peptidyl-tRNA molecules trapped in stalled 50S ribosomal subunits, and thus maintains levels of free tRNAs and 50S ribosomes. The protein is Peptidyl-tRNA hydrolase of Moorella thermoacetica (strain ATCC 39073 / JCM 9320).